Reading from the N-terminus, the 332-residue chain is Adenosine deaminase (332 aa).

Zn(2+)-binding residues include histidine 12 and histidine 14. Positions 14, 16, and 170 each coordinate substrate. Histidine 197 provides a ligand contact to Zn(2+). Glutamate 200 acts as the Proton donor in catalysis. Aspartate 278 provides a ligand contact to Zn(2+). Residue aspartate 279 participates in substrate binding.

Belongs to the metallo-dependent hydrolases superfamily. Adenosine and AMP deaminases family. Adenosine deaminase subfamily. The cofactor is Zn(2+).

The enzyme catalyses adenosine + H2O + H(+) = inosine + NH4(+). The catalysed reaction is 2'-deoxyadenosine + H2O + H(+) = 2'-deoxyinosine + NH4(+). Its function is as follows. Catalyzes the hydrolytic deamination of adenosine and 2-deoxyadenosine. This is Adenosine deaminase from Yersinia enterocolitica serotype O:8 / biotype 1B (strain NCTC 13174 / 8081).